The primary structure comprises 225 residues: Phosphoribosylformylglycinamidine synthase subunit PurQ (225 aa).

The Glutamine amidotransferase type-1 domain occupies 6–225; it reads FGVVVFPGSN…WQSILRSFAA (220 aa). Cysteine 89 (nucleophile) is an active-site residue. Active-site residues include histidine 198 and glutamate 200.

In terms of assembly, part of the FGAM synthase complex composed of 1 PurL, 1 PurQ and 2 PurS subunits.

The protein resides in the cytoplasm. It catalyses the reaction N(2)-formyl-N(1)-(5-phospho-beta-D-ribosyl)glycinamide + L-glutamine + ATP + H2O = 2-formamido-N(1)-(5-O-phospho-beta-D-ribosyl)acetamidine + L-glutamate + ADP + phosphate + H(+). It carries out the reaction L-glutamine + H2O = L-glutamate + NH4(+). The protein operates within purine metabolism; IMP biosynthesis via de novo pathway; 5-amino-1-(5-phospho-D-ribosyl)imidazole from N(2)-formyl-N(1)-(5-phospho-D-ribosyl)glycinamide: step 1/2. Part of the phosphoribosylformylglycinamidine synthase complex involved in the purines biosynthetic pathway. Catalyzes the ATP-dependent conversion of formylglycinamide ribonucleotide (FGAR) and glutamine to yield formylglycinamidine ribonucleotide (FGAM) and glutamate. The FGAM synthase complex is composed of three subunits. PurQ produces an ammonia molecule by converting glutamine to glutamate. PurL transfers the ammonia molecule to FGAR to form FGAM in an ATP-dependent manner. PurS interacts with PurQ and PurL and is thought to assist in the transfer of the ammonia molecule from PurQ to PurL. This Synechococcus sp. (strain JA-2-3B'a(2-13)) (Cyanobacteria bacterium Yellowstone B-Prime) protein is Phosphoribosylformylglycinamidine synthase subunit PurQ.